We begin with the raw amino-acid sequence, 424 residues long: Zinc metalloproteinase-disintegrin-like brevilysin H2a (424 aa).

Q1 carries the post-translational modification Pyrrolidone carboxylic acid. The Peptidase M12B domain occupies 9 to 207; sequence RYVKLAIVAD…YKPQCILNEP (199 aa). An N-linked (GlcNAc...) asparagine glycan is attached at N69. Position 96 (D96) interacts with Ca(2+). Disulfide bonds link C120/C202, C164/C186, and C166/C169. H145 lines the Zn(2+) pocket. Residue E146 is part of the active site. The Zn(2+) site is built by H149 and H155. N185 carries an N-linked (GlcNAc...) asparagine glycan. Residues C202, N205, V217, N220, L222, E224, E227, and D230 each coordinate Ca(2+). The Disintegrin domain maps to 215–301; sequence PPVCGNELLE…DCPTDDLQRN (87 aa). 14 cysteine pairs are disulfide-bonded: C218/C247, C229/C242, C231/C237, C241/C264, C255/C261, C260/C286, C273/C293, C280/C312, C305/C317, C324/C374, C339/C385, C352/C362, C369/C411, and C405/C417. The short motif at 279-281 is the D/ECD-tripeptide element; sequence DCD. D281, E284, and D296 together coordinate Ca(2+). A glycan (N-linked (GlcNAc...) asparagine) is linked at N331.

The protein belongs to the venom metalloproteinase (M12B) family. P-III subfamily. P-IIIa sub-subfamily. As to quaternary structure, monomer. Requires Zn(2+) as cofactor. Post-translationally, glycosylated. In terms of tissue distribution, expressed by the venom gland.

It localises to the secreted. Its proteolytic activity is inhibited by EDTA, TPEN, 1,10-phenanthroline, and some thiol compounds, but is enhanced by alkaline earth metal ions (Mg2+, Ca2+, Sr2+, and Ba2+). Its activity is not modulated by urea (4 M). Its function is as follows. Non-hemorrhagic metalloproteinase that degrades fibrinogen. The alpha chain (FGA) is rapidly degraded, the beta chain (FGB) is degraded very slowly, while the gamma chain is left intact. Shows a prefential cleavage at X-Leu bonds. Cleaves insulin B chain at '29-His-|-Leu-30', '33-Ser-|-His-34', '38-Ala-|-Leu-39' and '40-Tyr-|-Leu-41' bonds. This is Zinc metalloproteinase-disintegrin-like brevilysin H2a from Gloydius brevicauda (Korean slamosa snake).